The sequence spans 322 residues: GTP 3',8-cyclase (322 aa).

Residues 4–229 (NFNRNIDYLR…IPVQMKKSGP (226 aa)) form the Radical SAM core domain. Arg-13 is a binding site for GTP. [4Fe-4S] cluster contacts are provided by Cys-20 and Cys-24. Tyr-26 contacts S-adenosyl-L-methionine. Cys-27 provides a ligand contact to [4Fe-4S] cluster. Arg-64 lines the GTP pocket. Residue Gly-68 coordinates S-adenosyl-L-methionine. Thr-95 lines the GTP pocket. Ser-119 lines the S-adenosyl-L-methionine pocket. GTP is bound at residue Lys-156. Residue Met-190 participates in S-adenosyl-L-methionine binding. [4Fe-4S] cluster is bound by residues Cys-253 and Cys-256. 258–260 (RLR) lines the GTP pocket. Residue Cys-270 coordinates [4Fe-4S] cluster.

The protein belongs to the radical SAM superfamily. MoaA family. In terms of assembly, monomer and homodimer. Requires [4Fe-4S] cluster as cofactor.

It catalyses the reaction GTP + AH2 + S-adenosyl-L-methionine = (8S)-3',8-cyclo-7,8-dihydroguanosine 5'-triphosphate + 5'-deoxyadenosine + L-methionine + A + H(+). Its pathway is cofactor biosynthesis; molybdopterin biosynthesis. Its function is as follows. Catalyzes the cyclization of GTP to (8S)-3',8-cyclo-7,8-dihydroguanosine 5'-triphosphate. In Thermodesulfovibrio yellowstonii (strain ATCC 51303 / DSM 11347 / YP87), this protein is GTP 3',8-cyclase.